The following is a 686-amino-acid chain: Antigen peptide transporter 2 (686 aa).

Topologically, residues 1–6 (MRLPDL) are lumenal. The chain crosses the membrane as a helical span at residues 7–27 (RPWTSLLLVDAALLWLLQGPL). At 28–56 (GTLLPQGLPGLWLEGTLRLGGLWGLLKLR) the chain is on the cytoplasmic side. The helical transmembrane segment at 57–77 (GLLGFVGTLLLPLCLATPLTV) threads the bilayer. The Lumenal segment spans residues 78–98 (SLRALVAGASRAPPARVASAP). Residues 99-119 (WSWLLVGYGAAGLSWSLWAVL) traverse the membrane as a helical segment. The Cytoplasmic segment spans residues 120–148 (SPPGAQEKEQDQVNNKVLMWRLLKLSRPD). A helical transmembrane segment spans residues 149–169 (LPLLVAAFFFLVLAVLGETLI). The ABC transmembrane type-1 domain maps to 152–435 (LVAAFFFLVL…LVYIYGDMLS (284 aa)). The Lumenal portion of the chain corresponds to 170-187 (PHYSGRVIDILGGDFDPH). The chain crosses the membrane as a helical span at residues 188–208 (AFASAIFFMCLFSFGSSLSAG). Residues 209–266 (CRGGCFTYTMSRINLRIREQLFSSLLRQDLGFFQETKTGELNSRLSSDTTLMSNWLPL) lie on the Cytoplasmic side of the membrane. Residues 267-287 (NANVLLRSLVKVVGLYGFMLS) form a helical membrane-spanning segment. At 288-293 (ISPRLT) the chain is on the lumenal side. Residues 294–314 (LLSLLHMPFTIAAEKVYNTRH) traverse the membrane as a helical segment. Positions 301–389 (PFTIAAEKVY…RRVLHLGVQM (89 aa)) are part of the peptide-binding site. Over 315 to 374 (QEVLREIQDAVARAGQVVREAVGGLQTVRSFGAEEHEVCRYKEALEQCRQLYWRRDLERA) the chain is Cytoplasmic. A helical membrane pass occupies residues 375–395 (LYLLVRRVLHLGVQMLMLSCG). Residues 396-408 (LQQMQDGELTQGS) are Lumenal-facing. A helical transmembrane segment spans residues 409 to 429 (LLSFMIYQESVGSYVQTLVYI). Positions 414 to 433 (IYQESVGSYVQTLVYIYGDM) are part of the peptide-binding site. Topologically, residues 430–686 (YGDMLSNVGA…EGKLQKLAQL (257 aa)) are cytoplasmic. Residues 468-686 (VKFQDVSFAY…EGKLQKLAQL (219 aa)) form the ABC transporter domain. ATP is bound at residue 503–510 (GPNGSGKS).

It belongs to the ABC transporter superfamily. ABCB family. MHC peptide exporter (TC 3.A.1.209) subfamily. As to quaternary structure, heterodimer of TAP1 and TAP2 (TAP1-TAP2). A component of the peptide loading complex (PLC), interacts via TAPBP with MHCI heterodimer; this interaction mediates peptide-MHCI assembly. Recruits TAPBP in a 1:1 stoichiometry. Interacts with classical MHCI such as HLA-A*02-B2M; this interaction is obligatory for the loading of peptide epitopes. Interacts with non-classical MHCI molecules including HLA-E-B2M and HLA-F-B2M as well as PLC component CALR before the peptide loading. (Microbial infection) Interacts with Epstein-Barr virus BLNF2a. In terms of assembly, (Microbial infection) Interacts with herpes simplex virus US12/ICP47. As to quaternary structure, (Microbial infection) Interacts with adenovirus E3-19K glycoprotein, which binds TAP1-TAP2 and acts as a TAPBP inhibitor, preventing TAP1-TAP2 association with MHCI. Mg(2+) is required as a cofactor.

Its subcellular location is the endoplasmic reticulum membrane. It carries out the reaction a peptide antigen(in) + ATP + H2O = a peptide antigen(out) + ADP + phosphate + H(+). Inhibited at high ER lumenal peptide concentrations. Its activity is regulated as follows. (Microbial infection) Inhibited by herpes simplex virus US12/ICP47 protein, which blocks the peptide-binding site of TAP1-TAP2. With respect to regulation, (Microbial infection) Inhibited by human cytomegalovirus US6 glycoprotein, which binds to the lumenal side of TAP1-TAP2 complex and inhibits peptide translocation by specifically blocking ATP-binding and preventing TAP1-TAP2 conformational rearrangement induced by peptide binding. Its function is as follows. ABC transporter associated with antigen processing. In complex with TAP1 mediates unidirectional translocation of peptide antigens from cytosol to endoplasmic reticulum (ER) for loading onto MHC class I (MHCI) molecules. Uses the chemical energy of ATP to export peptides against the concentration gradient. During the transport cycle alternates between 'inward-facing' state with peptide binding site facing the cytosol to 'outward-facing' state with peptide binding site facing the ER lumen. Peptide antigen binding to ATP-loaded TAP1-TAP2 induces a switch to hydrolysis-competent 'outward-facing' conformation ready for peptide loading onto nascent MHCI molecules. Subsequently ATP hydrolysis resets the transporter to the 'inward facing' state for a new cycle. Typically transports intracellular peptide antigens of 8 to 13 amino acids that arise from cytosolic proteolysis via IFNG-induced immunoproteasome. Binds peptides with free N- and C-termini, the first three and the C-terminal residues being critical. Preferentially selects peptides having a highly hydrophobic residue at position 3 and hydrophobic or charged residues at the C-terminal anchor. Proline at position 2 has the most destabilizing effect. As a component of the peptide loading complex (PLC), acts as a molecular scaffold essential for peptide-MHCI assembly and antigen presentation. The chain is Antigen peptide transporter 2 from Homo sapiens (Human).